The following is a 1079-amino-acid chain: MEWLLEDLLGAKGDMGLLWGQLTHALACRHCGSSCFQSPGNLVTLFLFVVWQIQRWWQLGRLRQLHPWCSGNMVQGKELPLLHRVAFLDHLCKQKSEVEEEGEEEEEGEDEASLDPLKPCSPTKEAPTGEQATPAPPQPSCGSEGLLKAIGIPEQTVMQPVSPSRSFPIFQILTSFPVRHKIASGNRQQQRKSQLFWGLPSLHSESLEAIFLSSGGPSPLKWSVCSSVFFNKLAFLPRSNLLLPQYHSSAQFSTHGAHTMEDLEGMAPDPQLLPPPSSPSVSSLLLHLRPFPVDHKGVLSGAEAPTQSPGTSPLEVLPGYETHLETTGHKKMPQAFEPPMPPPCQSPASLSEPRKVSPEGGLAISKDFWGTVGYREKPQASESSMPVPCPPLDSLPELQRESSLEDPSRYKPQWECRENSGNLWAFESPVLDLNPELSGTSPECVPPASETPWKGMQSRENIWVPADPVSPPSLPSVPLLESLVMGPQGVLSESKALWETMGQKENLWASDSPDPVHSTPPTTLMEPHRINPGECLATSEATWKDTEHSRNSSASRSPSLALSPPPALAPELLRVRSMGVLSDSEARCGDIQKTKNSWASKHPACNLPQDLHGASPLGVLSDSQSIVGEMEQKENCVPVFPGRGSSPSSNSVSKSHVSEPIADQSNYKPDGEAVEQRKNHWATELPAPSSLSTPLPEPHIDLELVWRNVQQREVPQGPSPLAVDPLHPVPQPPTLAEAVKIERTHPGLPKGVTCPGVKAEAPLSQRWTVPELLTHPGIHAWQWSRELKLRLKKLRQSPASRAPGPSQSFCSSPILSSTIPDFWGLPSCPPQQIYPPNPCPHSSSCHPQEVQRTVPQPVQSSHCHHFQSSSQLQPQESGRAEQGSQRGEKMKGKMVSQVPSQGPCVHMEAGVDYLSPGPGEPSNSKVLVSGKRKDKASASSSAKKREHPRKPKAGDHRRGTARLGLSTVTGKNHPAQARSLVEAPVSTFPQRSQHRGQSSQHTALPQLLLPKASGPQDQPEAGRRASDILTPRHCKHCPWAHMEKYLSFPTLKASLTRGLQKVLAKCLDNHRPLPTKSSQ.

Disordered regions lie at residues 97 to 145 (EVEE…GSEG), 261 to 281 (EDLEGMAPDPQLLPPPSSPSV), 297 to 317 (GVLSGAEAPTQSPGTSPLEVL), 331 to 362 (KMPQAFEPPMPPPCQSPASLSEPRKVSPEGGL), 376 to 412 (EKPQASESSMPVPCPPLDSLPELQRESSLEDPSRYKP), 506 to 566 (NLWA…SPPP), 637 to 678 (VPVF…EQRK), and 840 to 975 (PHSS…NHPA). Over residues 98–113 (VEEEGEEEEEGEDEAS) the composition is skewed to acidic residues. Positions 336–345 (FEPPMPPPCQ) are enriched in pro residues. Basic and acidic residues predominate over residues 398–412 (LQRESSLEDPSRYKP). 2 stretches are compositionally biased toward low complexity: residues 551 to 562 (NSSASRSPSLAL) and 645 to 655 (SSPSSNSVSKS). The segment covering 669 to 678 (PDGEAVEQRK) has biased composition (basic and acidic residues). Positions 942-951 (AKKREHPRKP) are enriched in basic residues.

In terms of biological role, dispensable for normal development and fertility. This is Spermatogenesis-associated protein 31G1 from Homo sapiens (Human).